An 882-amino-acid polypeptide reads, in one-letter code: DNA mismatch repair protein MutS (882 aa).

G629–S636 contacts ATP.

The protein belongs to the DNA mismatch repair MutS family.

In terms of biological role, this protein is involved in the repair of mismatches in DNA. It is possible that it carries out the mismatch recognition step. This protein has a weak ATPase activity. This is DNA mismatch repair protein MutS from Ralstonia nicotianae (strain ATCC BAA-1114 / GMI1000) (Ralstonia solanacearum).